Consider the following 179-residue polypeptide: Ribosome maturation factor RimM (179 aa).

The PRC barrel domain occupies 99 to 174 (EEDEYYFDQI…IMIVDLPEGL (76 aa)).

It belongs to the RimM family. As to quaternary structure, binds ribosomal protein uS19.

Its subcellular location is the cytoplasm. An accessory protein needed during the final step in the assembly of 30S ribosomal subunit, possibly for assembly of the head region. Essential for efficient processing of 16S rRNA. May be needed both before and after RbfA during the maturation of 16S rRNA. It has affinity for free ribosomal 30S subunits but not for 70S ribosomes. The sequence is that of Ribosome maturation factor RimM from Natranaerobius thermophilus (strain ATCC BAA-1301 / DSM 18059 / JW/NM-WN-LF).